Consider the following 331-residue polypeptide: Protein-methionine-sulfoxide reductase catalytic subunit MsrP (331 aa).

Positions 1-54 (MLIKTDRWLRGDDIPASEITPQHLFDQRRRLLAAAALGAAGAALSPWAARRAFA) form a signal peptide, tat-type signal. Mo-molybdopterin is bound by residues N86, 89–90 (YE), C144, S179, N227, R232, and 243–245 (SAK).

Belongs to the MsrP family. As to quaternary structure, heterodimer of a catalytic subunit (MsrP) and a heme-binding subunit (MsrQ). Mo-molybdopterin is required as a cofactor. In terms of processing, predicted to be exported by the Tat system. The position of the signal peptide cleavage has not been experimentally proven.

Its subcellular location is the periplasm. The enzyme catalyses L-methionyl-[protein] + a quinone + H2O = L-methionyl-(S)-S-oxide-[protein] + a quinol. It carries out the reaction L-methionyl-[protein] + a quinone + H2O = L-methionyl-(R)-S-oxide-[protein] + a quinol. Its function is as follows. Part of the MsrPQ system that repairs oxidized periplasmic proteins containing methionine sulfoxide residues (Met-O), using respiratory chain electrons. Thus protects these proteins from oxidative-stress damage caused by reactive species of oxygen and chlorine generated by the host defense mechanisms. MsrPQ is essential for the maintenance of envelope integrity under bleach stress, rescuing a wide series of structurally unrelated periplasmic proteins from methionine oxidation. The catalytic subunit MsrP is non-stereospecific, being able to reduce both (R-) and (S-) diastereoisomers of methionine sulfoxide. This chain is Protein-methionine-sulfoxide reductase catalytic subunit MsrP, found in Ralstonia nicotianae (strain ATCC BAA-1114 / GMI1000) (Ralstonia solanacearum).